The following is a 186-amino-acid chain: Probable chorismate pyruvate-lyase (186 aa).

The substrate site is built by R77, L115, and E174.

Belongs to the UbiC family.

It is found in the cytoplasm. The enzyme catalyses chorismate = 4-hydroxybenzoate + pyruvate. It participates in cofactor biosynthesis; ubiquinone biosynthesis. Functionally, removes the pyruvyl group from chorismate, with concomitant aromatization of the ring, to provide 4-hydroxybenzoate (4HB) for the ubiquinone pathway. This Shewanella sp. (strain W3-18-1) protein is Probable chorismate pyruvate-lyase.